A 350-amino-acid chain; its full sequence is C5a anaphylatoxin chemotactic receptor 1 (350 aa).

The Extracellular portion of the chain corresponds to 1-36; that stretch reads APMENSTYDYTNYDSLGTLDPSTPVDNTVRRLRPTT. Residue asparagine 5 is glycosylated (N-linked (GlcNAc...) asparagine). A sulfotyrosine mark is found at tyrosine 10 and tyrosine 13. The helical transmembrane segment at 37 to 63 threads the bilayer; that stretch reads IVALVIYMAVFLVGVPGNALVVWVTAL. Residues 64 to 68 lie on the Cytoplasmic side of the membrane; the sequence is EAKRT. Residues 69-92 form a helical membrane-spanning segment; the sequence is VNAIWFLNLAVADLLSCLALPILF. Topologically, residues 93–109 are extracellular; it reads VSIIQEGHWPFGRAACS. An intrachain disulfide couples cysteine 108 to cysteine 187. A helical transmembrane segment spans residues 110 to 131; the sequence is VLPSLILLNMYASILLLATISA. The Cytoplasmic portion of the chain corresponds to 132–152; that stretch reads DRFLLVFNPIWCQNTRGAGLA. A helical transmembrane segment spans residues 153 to 173; that stretch reads WLACCVAWGLALLLTIPSFLY. Residues 174-200 lie on the Extracellular side of the membrane; the sequence is RKVLQDDYPPKTTCGVDYGHEGVRAER. Residues 201–226 form a helical membrane-spanning segment; that stretch reads AVAIVRLVVGFLLPLFTLSVCYTFLL. The Cytoplasmic segment spans residues 227 to 242; it reads LRTWSRNGTRSTKTLK. Residues 243–265 form a helical membrane-spanning segment; that stretch reads VVVAVVVSFFIFWLPYQVMGMIL. Over 266–282 the chain is Extracellular; sequence ALLHPSSATFRWAIRLD. Residues 283–303 traverse the membrane as a helical segment; sequence PLCIALAYVNCCINPIIYVVA. The Cytoplasmic segment spans residues 304–350; it reads GKGFQGQLRKSLPSLLRNVLAEESVIQGSKSFSRSTVDTVADKCQAV. Phosphoserine occurs at positions 314, 317, 327, 332, 334, and 338.

Belongs to the G-protein coupled receptor 1 family. Homodimer. May also form higher-order oligomers. Interacts (when phosphorylated) with ARRB1 and ARRB2; the interaction is associated with internalization of C5aR. Post-translationally, sulfation plays a critical role in the association of C5aR with C5a, but no significant role in the ability of the receptor to transduce a signal and mobilize calcium in response to a small peptide agonist. Phosphorylated on serine residues in response to C5a binding, resulting in internalization of the receptor and short-term desensitization to C5a.

It is found in the cell membrane. It localises to the cytoplasmic vesicle. Functionally, receptor for the chemotactic and inflammatory peptide anaphylatoxin C5a. The ligand interacts with at least two sites on the receptor: a high-affinity site on the extracellular N-terminus, and a second site in the transmembrane region which activates downstream signaling events. Receptor activation stimulates chemotaxis, granule enzyme release, intracellular calcium release and superoxide anion production. This Oryctolagus cuniculus (Rabbit) protein is C5a anaphylatoxin chemotactic receptor 1 (C5AR1).